Here is a 739-residue protein sequence, read N- to C-terminus: Catalase-peroxidase (739 aa).

Residues Met-1–Gly-33 are disordered. The tryptophyl-tyrosyl-methioninium (Trp-Tyr) (with M-255) cross-link spans Trp-106–Tyr-229. The Proton acceptor role is filled by His-107. A disordered region spans residues Arg-113–Trp-134. A cross-link (tryptophyl-tyrosyl-methioninium (Tyr-Met) (with W-106)) is located at residues Tyr-229–Met-255. His-270 is a heme b binding site.

Belongs to the peroxidase family. Peroxidase/catalase subfamily. In terms of assembly, homodimer or homotetramer. The cofactor is heme b. In terms of processing, formation of the three residue Trp-Tyr-Met cross-link is important for the catalase, but not the peroxidase activity of the enzyme.

It carries out the reaction H2O2 + AH2 = A + 2 H2O. The enzyme catalyses 2 H2O2 = O2 + 2 H2O. Its function is as follows. Bifunctional enzyme with both catalase and broad-spectrum peroxidase activity. This Nocardia farcinica (strain IFM 10152) protein is Catalase-peroxidase.